The following is a 301-amino-acid chain: NADH-cytochrome b5 reductase 2 (301 aa).

A helical transmembrane segment spans residues 14-30; that stretch reads FLVPFAGATALSIGLAL. The region spanning 51–155 is the FAD-binding FR-type domain; sequence NEWVDLKLSK…KGPIVKWKWE (105 aa). 158–193 is a binding site for FAD; the sequence is QFKSIALIGGGTGITPLYQLLHQITSNPKDNTKVNL.

The protein belongs to the flavoprotein pyridine nucleotide cytochrome reductase family. It depends on FAD as a cofactor.

The protein resides in the mitochondrion outer membrane. The enzyme catalyses 2 Fe(III)-[cytochrome b5] + NADH = 2 Fe(II)-[cytochrome b5] + NAD(+) + H(+). Functionally, may mediate the reduction of outer membrane cytochrome b5. This is NADH-cytochrome b5 reductase 2 (MCR1) from Candida albicans (strain SC5314 / ATCC MYA-2876) (Yeast).